The sequence spans 256 residues: Pimeloyl-[acyl-carrier protein] methyl ester esterase (256 aa).

The AB hydrolase-1 domain occupies 15 to 242 (HLVLLHGWGL…AAHAPFISHP (228 aa)). Substrate is bound by residues tryptophan 22, 82 to 83 (SL), and 143 to 147 (FLALQ). Serine 82 acts as the Nucleophile in catalysis. Active-site residues include aspartate 207 and histidine 235. Histidine 235 is a substrate binding site.

This sequence belongs to the AB hydrolase superfamily. Carboxylesterase BioH family. Monomer.

It localises to the cytoplasm. It carries out the reaction 6-carboxyhexanoyl-[ACP] methyl ester + H2O = 6-carboxyhexanoyl-[ACP] + methanol + H(+). The protein operates within cofactor biosynthesis; biotin biosynthesis. In terms of biological role, the physiological role of BioH is to remove the methyl group introduced by BioC when the pimeloyl moiety is complete. It allows to synthesize pimeloyl-ACP via the fatty acid synthetic pathway through the hydrolysis of the ester bonds of pimeloyl-ACP esters. This is Pimeloyl-[acyl-carrier protein] methyl ester esterase from Salmonella choleraesuis (strain SC-B67).